The chain runs to 299 residues: ATP phosphoribosyltransferase (299 aa).

It belongs to the ATP phosphoribosyltransferase family. Long subfamily. The cofactor is Mg(2+).

It localises to the cytoplasm. It carries out the reaction 1-(5-phospho-beta-D-ribosyl)-ATP + diphosphate = 5-phospho-alpha-D-ribose 1-diphosphate + ATP. It participates in amino-acid biosynthesis; L-histidine biosynthesis; L-histidine from 5-phospho-alpha-D-ribose 1-diphosphate: step 1/9. With respect to regulation, feedback inhibited by histidine. In terms of biological role, catalyzes the condensation of ATP and 5-phosphoribose 1-diphosphate to form N'-(5'-phosphoribosyl)-ATP (PR-ATP). Has a crucial role in the pathway because the rate of histidine biosynthesis seems to be controlled primarily by regulation of HisG enzymatic activity. The polypeptide is ATP phosphoribosyltransferase (Shewanella frigidimarina (strain NCIMB 400)).